We begin with the raw amino-acid sequence, 95 residues long: Protein IDA-LIKE 2 (95 aa).

An N-terminal signal peptide occupies residues 1–35 (MSSRNQRSRITSSFFVSFFTRTILLLLILLLGFCN). Positions 75–95 (ASGPSRKHNDIGLLSWHRSSP) are disordered.

As to expression, expressed in leaves, buds, flowers, seedlings and seeds. Detected at the base of pedicel, in the floral and funicule abscission zones and in vascular tissues.

The protein localises to the secreted. The protein resides in the extracellular space. Its function is as follows. May be involved in floral abscission. In Arabidopsis thaliana (Mouse-ear cress), this protein is Protein IDA-LIKE 2 (IDL2).